A 506-amino-acid polypeptide reads, in one-letter code: Glycine--tRNA ligase (506 aa).

2 residues coordinate substrate: R99 and E189. Residues 221-223, 231-236, 306-307, and 365-368 contribute to the ATP site; these read RNE, FRVREL, EI, and GVDR. 236-240 provides a ligand contact to substrate; it reads LEQME. 361–365 lines the substrate pocket; sequence EPSAG.

This sequence belongs to the class-II aminoacyl-tRNA synthetase family. Homodimer.

The protein localises to the cytoplasm. The catalysed reaction is tRNA(Gly) + glycine + ATP = glycyl-tRNA(Gly) + AMP + diphosphate. Its function is as follows. Catalyzes the attachment of glycine to tRNA(Gly). This chain is Glycine--tRNA ligase, found in Deinococcus radiodurans (strain ATCC 13939 / DSM 20539 / JCM 16871 / CCUG 27074 / LMG 4051 / NBRC 15346 / NCIMB 9279 / VKM B-1422 / R1).